The primary structure comprises 615 residues: 1-deoxy-D-xylulose-5-phosphate synthase (615 aa).

Residues His-76 and 117 to 119 contribute to the thiamine diphosphate site; that span reads GHS. Asp-148 contacts Mg(2+). Residues 149–150, Asn-177, Tyr-284, and Glu-365 each bind thiamine diphosphate; that span reads GA. Asn-177 contacts Mg(2+).

This sequence belongs to the transketolase family. DXPS subfamily. In terms of assembly, homodimer. The cofactor is Mg(2+). Thiamine diphosphate serves as cofactor.

It carries out the reaction D-glyceraldehyde 3-phosphate + pyruvate + H(+) = 1-deoxy-D-xylulose 5-phosphate + CO2. The protein operates within metabolic intermediate biosynthesis; 1-deoxy-D-xylulose 5-phosphate biosynthesis; 1-deoxy-D-xylulose 5-phosphate from D-glyceraldehyde 3-phosphate and pyruvate: step 1/1. Catalyzes the acyloin condensation reaction between C atoms 2 and 3 of pyruvate and glyceraldehyde 3-phosphate to yield 1-deoxy-D-xylulose-5-phosphate (DXP). The polypeptide is 1-deoxy-D-xylulose-5-phosphate synthase (Francisella tularensis subsp. mediasiatica (strain FSC147)).